The following is a 465-amino-acid chain: Presenilin spe-4 (465 aa).

Over Met1–Arg18 the chain is Cytoplasmic. A helical transmembrane segment spans residues Trp19–Tyr39. Residues Asn40 to Asn71 are Lumenal-facing. The helical transmembrane segment at Gly72–Phe92 threads the bilayer. Topologically, residues Asp93–Arg96 are cytoplasmic. The helical transmembrane segment at Ile97–Thr117 threads the bilayer. Topologically, residues Leu118–Met136 are lumenal. Residues Thr137–Phe157 form a helical membrane-spanning segment. Residues Ser158–Ser160 are Cytoplasmic-facing. Residues Ser161–Leu181 form a helical membrane-spanning segment. The Lumenal segment spans residues Arg182–Trp190. A helical membrane pass occupies residues Phe191–Leu211. Asp200 is an active-site residue. Residues Lys212–Arg389 lie on the Cytoplasmic side of the membrane. The interval Ile287 to Asp356 is disordered. The segment covering Ser326–Ser350 has biased composition (low complexity). Residues Leu390–Cys410 traverse the membrane as a helical segment. Residue Asp394 is part of the active site. A topological domain (lumenal) is located at residue Pro411. A helical membrane pass occupies residues Phe412–Phe432. Topologically, residues Ser433 to Thr439 are cytoplasmic. The PAL signature appears at Pro440–Leu442. The helical intramembrane region spans Pro440–Trp460. Over Glu461–Gly465 the chain is Cytoplasmic.

It belongs to the peptidase A22A family. As to quaternary structure, homodimer. Potential component of the gamma-secretase complex, a complex probably composed of the presenilin homodimer (sel-12, hop-1 or spe-4), nicastrin (aph-2), aph-1 and pen-2.

Its subcellular location is the endoplasmic reticulum membrane. The protein localises to the golgi apparatus. The protein resides in the cis-Golgi network membrane. Functionally, potential catalytic subunit of the gamma-secretase complex during spermatogenesis, an endoprotease complex that catalyzes the intramembrane cleavage of integral membrane proteins such as Notch receptors (lin-12 or glp-1). Involved in spermatid formation during meiosis II. May be required for proper localization of macromolecules that are subject to asymmetric partitioning during spermatogenesis. This is Presenilin spe-4 from Caenorhabditis elegans.